Reading from the N-terminus, the 332-residue chain is L-lactate dehydrogenase A chain (332 aa).

NAD(+)-binding positions include 29–57 (GAVG…IEDK) and arginine 99. Substrate-binding residues include arginine 106, asparagine 138, and arginine 169. NAD(+) is bound at residue asparagine 138. The Proton acceptor role is filled by histidine 193. Threonine 248 is a binding site for substrate.

This sequence belongs to the LDH/MDH superfamily. LDH family. Homotetramer.

It is found in the cytoplasm. The catalysed reaction is (S)-lactate + NAD(+) = pyruvate + NADH + H(+). It participates in fermentation; pyruvate fermentation to lactate; (S)-lactate from pyruvate: step 1/1. In terms of biological role, interconverts simultaneously and stereospecifically pyruvate and lactate with concomitant interconversion of NADH and NAD(+). This chain is L-lactate dehydrogenase A chain (LDHA), found in Trachemys scripta elegans (Red-eared slider turtle).